A 377-amino-acid chain; its full sequence is UDP-N-acetylglucosamine--N-acetylmuramyl-(pentapeptide) pyrophosphoryl-undecaprenol N-acetylglucosamine transferase (377 aa).

Residues 11 to 13 (TGG), Asn-123, Arg-164, Ser-194, and Gln-295 contribute to the UDP-N-acetyl-alpha-D-glucosamine site.

This sequence belongs to the glycosyltransferase 28 family. MurG subfamily.

It is found in the cell inner membrane. The catalysed reaction is di-trans,octa-cis-undecaprenyl diphospho-N-acetyl-alpha-D-muramoyl-L-alanyl-D-glutamyl-meso-2,6-diaminopimeloyl-D-alanyl-D-alanine + UDP-N-acetyl-alpha-D-glucosamine = di-trans,octa-cis-undecaprenyl diphospho-[N-acetyl-alpha-D-glucosaminyl-(1-&gt;4)]-N-acetyl-alpha-D-muramoyl-L-alanyl-D-glutamyl-meso-2,6-diaminopimeloyl-D-alanyl-D-alanine + UDP + H(+). Its pathway is cell wall biogenesis; peptidoglycan biosynthesis. Its function is as follows. Cell wall formation. Catalyzes the transfer of a GlcNAc subunit on undecaprenyl-pyrophosphoryl-MurNAc-pentapeptide (lipid intermediate I) to form undecaprenyl-pyrophosphoryl-MurNAc-(pentapeptide)GlcNAc (lipid intermediate II). This Opitutus terrae (strain DSM 11246 / JCM 15787 / PB90-1) protein is UDP-N-acetylglucosamine--N-acetylmuramyl-(pentapeptide) pyrophosphoryl-undecaprenol N-acetylglucosamine transferase.